We begin with the raw amino-acid sequence, 224 residues long: Peptidyl-prolyl cis-trans isomerase FKBP3 (224 aa).

The residue at position 2 (Ala2) is an N-acetylalanine. Residue Ser36 is modified to Phosphoserine. A compositionally biased stretch (basic and acidic residues) spans 89 to 102; sequence KLNEDKPKETKSEE. The disordered stretch occupies residues 89–111; it reads KLNEDKPKETKSEETLDEGPPKY. Lys99 carries the post-translational modification N6-acetyllysine. The PPIase FKBP-type domain occupies 128–224; that stretch reads GDVVHCWYTG…TFEVELVDID (97 aa). Residue Ser152 is modified to Phosphoserine. Residue Lys170 is modified to N6-acetyllysine.

This sequence belongs to the FKBP-type PPIase family.

The protein localises to the nucleus. It carries out the reaction [protein]-peptidylproline (omega=180) = [protein]-peptidylproline (omega=0). With respect to regulation, inhibited preferentially by rapamycin over FK506. Its function is as follows. FK506- and rapamycin-binding proteins (FKBPs) constitute a family of receptors for the two immunosuppressants which inhibit T-cell proliferation by arresting two distinct cytoplasmic signal transmission pathways. PPIases accelerate the folding of proteins. The polypeptide is Peptidyl-prolyl cis-trans isomerase FKBP3 (FKBP3) (Homo sapiens (Human)).